Here is a 633-residue protein sequence, read N- to C-terminus: MTTPKKTAKTSGNEARELADLSEDIGIRFKYPNSERVYLQGSRDDIRVPLREIRQDDTYTAQGAEANPPIPVYDTSGVYGDPAAHIDLKQGLPHIRTAWLNERGDTEILPKLSSEYGIERAHDPKTAHLRFNQITRPRRAKSGGNVTQLHYARRGIITPEMEFVAIRERLKLDELSQKSEYAKLLKQHAGQSFGANIPTHPDQITPEFVRREIAAGRAIIPANINHPELEPMIIGRNFRVKINGNLGNSAVTSSLTEEVEKMVWSLRWGADTIMDLSTGAHIHETREWIIRNAPVPIGTVPIYQALEKTGGIAEDLTWDLFRDTLIEQAEQGVDYFTIHAGVLLRYVPMTADRLTGIVSRGGSIMAKWCLAHHRENFLYTHFDEICEIMKAYDVSFSLGDGLRPGCIADANDESQFAELHTLGELTSKAWKHDVQVMIEGPGHVPLQRVKENMTEELQHCFEAPFYTLGPLVTDIAPGYDHITSGIGAANIGWYGTAMLCYVTPKEHLGLPDKEDVRTGIITYKLAAHAADLAKGWPGAQLRDNALSKARFEFRWRDQFRLSLDPERAESFHDETLPAEGAKIAHFCSMCGPKFCSMKITQEVRDYADKQKAQRQGMEEKAVEFVKKGAKIYS.

Substrate-binding positions include asparagine 245, methionine 274, tyrosine 303, histidine 339, 359-361, 400-403, and glutamate 439; these read SRG and DGLR. Residue histidine 443 participates in Zn(2+) binding. Tyrosine 466 is a substrate binding site. Histidine 507 is a Zn(2+) binding site. Cysteine 587, cysteine 590, and cysteine 595 together coordinate [4Fe-4S] cluster.

It belongs to the ThiC family. Homodimer. Requires [4Fe-4S] cluster as cofactor.

The enzyme catalyses 5-amino-1-(5-phospho-beta-D-ribosyl)imidazole + S-adenosyl-L-methionine = 4-amino-2-methyl-5-(phosphooxymethyl)pyrimidine + CO + 5'-deoxyadenosine + formate + L-methionine + 3 H(+). Its pathway is cofactor biosynthesis; thiamine diphosphate biosynthesis. Catalyzes the synthesis of the hydroxymethylpyrimidine phosphate (HMP-P) moiety of thiamine from aminoimidazole ribotide (AIR) in a radical S-adenosyl-L-methionine (SAM)-dependent reaction. The protein is Phosphomethylpyrimidine synthase of Neisseria meningitidis serogroup C / serotype 2a (strain ATCC 700532 / DSM 15464 / FAM18).